Here is a 120-residue protein sequence, read N- to C-terminus: uncharacterized protein (120 aa).

This is an uncharacterized protein from Methanocaldococcus jannaschii (strain ATCC 43067 / DSM 2661 / JAL-1 / JCM 10045 / NBRC 100440) (Methanococcus jannaschii).